A 1997-amino-acid chain; its full sequence is Otoferlin (1997 aa).

A C2 1 domain is found at 1–98; sequence MALIVHLKTV…VEENRVEVTD (98 aa). Residues 1-1963 are Cytoplasmic-facing; that stretch reads MALIVHLKTV…ARYFLWHTYR (1963 aa). Positions 140 to 167 are disordered; it reads QEEKDSQETDGLLPGSRPSTRISGEKSF. C2 domains lie at 235–356 and 399–530; these read KRSK…HKWA and IEGN…FLPT. The disordered stretch occupies residues 643 to 692; that stretch reads VDGMSRPLRPRPRKEPGDEEEVDLIQNSSDDEGDEAGDLASVSSTPPMRP. Residues 659-679 show a composition bias toward acidic residues; sequence GDEEEVDLIQNSSDDEGDEAG. The stretch at 791-820 forms a coiled coil; it reads RERLKSCMRELESMGQQAKSLRAQVKRHTV. 2 C2 domains span residues 943 to 1068 and 1115 to 1241; these read LHSF…PPRF and RGPI…PNWN. The Ca(2+) site is built by aspartate 975, aspartate 981, aspartate 1037, aspartate 1039, and aspartate 1045. 3 disordered regions span residues 1253–1272, 1296–1326, and 1343–1402; these read LRNG…SMEP, DVAE…ESML, and LRQH…EKKK. Acidic residues-rich tracts occupy residues 1314 to 1325 and 1352 to 1361; these read EEPEEEEPDESM and DLEEKEEMES. Residues 1370 to 1383 show a composition bias toward basic and acidic residues; it reads KSKEKSRAAKEEKK. 2 C2 domains span residues 1464–1593 and 1714–1865; these read LPED…ATCG and DMPA…KQCT. Ca(2+)-binding residues include aspartate 1508, aspartate 1514, aspartate 1563, aspartate 1565, aspartate 1571, aspartate 1836, serine 1839, and aspartate 1842. A helical membrane pass occupies residues 1964–1984; that stretch reads WLLLKFLLLFLLLLLFALFLY. Over 1985–1997 the chain is Extracellular; the sequence is SLPGYLAKKILGA.

Belongs to the ferlin family. As to quaternary structure, interacts with SNAP25; the interaction is direct. Interacts with STX1; the interaction is direct. Interacts with RAB8B. It depends on Ca(2+) as a cofactor. As to expression, isoform 1 is expressed in cochlea and brain. Expressed in the cochlear and vestibular hair cells. Expressed in both inner and outer hair cells (IHCs and OHCs) and cochlear ganglions neurons at postnatal day 2 (P2) and 6 (P6). Expressed only in IHCs at postnatal day 60 (P60) (at protein level). Strongly expressed in brain and inner ear. In the inner ear, it is mainly expressed in the cochlear IHC and vestibular type I sensory hair cells. Weakly expressed in eye, heart, skeletal muscle, liver, kidney, lung and testis.

The protein localises to the cytoplasmic vesicle. It localises to the secretory vesicle. It is found in the synaptic vesicle membrane. The protein resides in the basolateral cell membrane. Its subcellular location is the endoplasmic reticulum membrane. The protein localises to the golgi apparatus membrane. It localises to the presynaptic cell membrane. It is found in the cell membrane. Functionally, key calcium ion sensor involved in the Ca(2+)-triggered synaptic vesicle-plasma membrane fusion and in the control of neurotransmitter release at these output synapses. Interacts in a calcium-dependent manner to the presynaptic SNARE proteins at ribbon synapses of cochlear inner hair cells (IHCs) to trigger exocytosis of neurotransmitter. Also essential to synaptic exocytosis in immature outer hair cells (OHCs). May also play a role within the recycling of endosomes. The chain is Otoferlin (Otof) from Mus musculus (Mouse).